A 138-amino-acid polypeptide reads, in one-letter code: MSAAVLLSVLFALACGQAASFCIPTEYTMYVDRRECAYCLTINTTICAGYCMTRDINGKLFLPKYALSQDVCTYRDFIYRTVEIPGCPHHVTPYFSFPVAVSCKCGKCNTDNSDCIHEAVRTNYCTKPQSFYLGGFSV.

The first 20 residues, 1–20 (MSAAVLLSVLFALACGQAAS), serve as a signal peptide directing secretion. Cystine bridges form between Cys22–Cys72, Cys36–Cys87, Cys39–Cys125, Cys47–Cys103, Cys51–Cys105, and Cys108–Cys115. An N-linked (GlcNAc...) asparagine glycan is attached at Asn43. Residues 133 to 138 (LGGFSV) constitute a propeptide that is removed on maturation.

It belongs to the glycoprotein hormones subunit beta family. As to quaternary structure, heterodimer of a common alpha chain and a unique beta chain which confers biological specificity to thyrotropin, lutropin, follitropin and gonadotropin.

It is found in the secreted. Functionally, indispensable for the control of thyroid structure and metabolism. This Mus musculus (Mouse) protein is Thyrotropin subunit beta (Tshb).